The primary structure comprises 104 residues: Large ribosomal subunit protein uL24 (104 aa).

It belongs to the universal ribosomal protein uL24 family. Part of the 50S ribosomal subunit.

Its function is as follows. One of two assembly initiator proteins, it binds directly to the 5'-end of the 23S rRNA, where it nucleates assembly of the 50S subunit. In terms of biological role, one of the proteins that surrounds the polypeptide exit tunnel on the outside of the subunit. The sequence is that of Large ribosomal subunit protein uL24 from Caulobacter vibrioides (strain ATCC 19089 / CIP 103742 / CB 15) (Caulobacter crescentus).